Consider the following 422-residue polypeptide: Beta-1,3-galactosyltransferase 2 (422 aa).

The Cytoplasmic portion of the chain corresponds to 1–24 (MLQWRRRHCCFAKMTWNAKRSLFR). Residues 25–45 (THLIGVLSLVFLFAMFLFFNH) traverse the membrane as a helical; Signal-anchor for type II membrane protein segment. The Lumenal portion of the chain corresponds to 46–422 (HDWLPGRAGF…AGRYRHRKLH (377 aa)). Residues Asn75, Asn100, Asn119, Asn176, and Asn226 are each glycosylated (N-linked (GlcNAc...) asparagine). The interval 90–110 (TLRPQTATNSNNTDLSPQGVT) is disordered.

This sequence belongs to the glycosyltransferase 31 family. It depends on Mn(2+) as a cofactor. In terms of tissue distribution, detected in heart and brain.

Its subcellular location is the golgi apparatus membrane. The catalysed reaction is an N-acetyl-beta-D-glucosaminyl derivative + UDP-alpha-D-galactose = a beta-D-galactosyl-(1-&gt;3)-N-acetyl-beta-D-glucosaminyl derivative + UDP + H(+). The enzyme catalyses a beta-D-GlcNAc-(1-&gt;3)-beta-D-Gal-(1-&gt;4)-beta-D-Glc-(1&lt;-&gt;1)-Cer(d18:1(4E)) + UDP-alpha-D-galactose = a beta-D-Gal-(1-&gt;3)-beta-D-GlcNAc-(1-&gt;3)-beta-D-Gal-(1-&gt;4)-beta-D-Glc-(1&lt;-&gt;1')-Cer(d18:1(4E)) + UDP + H(+). It catalyses the reaction a neolactoside IV(3)-beta-GlcNAc-nLc4Cer(d18:1(4E)) + UDP-alpha-D-galactose = a neolactoside IV(3)-beta-[Gal-beta-(1-&gt;3)-GlcNAc]-nLc4Cer(d18:1(4E)) + UDP + H(+). It participates in protein modification; protein glycosylation. Functionally, beta-1,3-galactosyltransferase that transfers galactose from UDP-galactose to substrates with a terminal beta-N-acetylglucosamine (beta-GlcNAc) residue. Can also utilize substrates with a terminal galactose residue, albeit with lower efficiency. Involved in the biosynthesis of the carbohydrate moieties of glycolipids and glycoproteins. Inactive towards substrates with terminal alpha-N-acetylglucosamine (alpha-GlcNAc) or alpha-N-acetylgalactosamine (alpha-GalNAc) residues. The chain is Beta-1,3-galactosyltransferase 2 from Homo sapiens (Human).